A 264-amino-acid polypeptide reads, in one-letter code: Short chain dehydrogenase/reductase nsrJ (264 aa).

Residues isoleucine 24, aspartate 70, asparagine 97, and arginine 130 each contribute to the NADP(+) site. Active-site proton donor residues include serine 146 and serine 147. NADP(+) is bound by residues tyrosine 161, lysine 165, and threonine 196. Tyrosine 161 acts as the Proton acceptor in catalysis. Lysine 165 acts as the Lowers pKa of active site Tyr in catalysis.

The protein belongs to the short-chain dehydrogenases/reductases (SDR) family.

It participates in secondary metabolite biosynthesis. Functionally, short chain dehydrogenase/reductase; part of the gene cluster that mediates the biosynthesis of the tetrahydroxanthone dimer neosartorin, which exhibits antibacterial activity. The two different monomeric units appear to be synthesized by the same set of enzymes, among which the Baeyer-Villiger monooxygenase nsrF is the key enzyme for the divergence of the biosynthetic routes. The pathway begins with the synthesis of atrochrysone thioester by the polyketide synthase nsrB. The atrochrysone carboxyl ACP thioesterase nsrC then breaks the thioester bond and releases the atrochrysone carboxylic acid from AacuL. Atrochrysone carboxylic acid is decarboxylated by the decarboxylase nsrE, and oxidized by the anthrone oxygenase nsrD to yield emodin. Emodin is then reduced to emodin hydroquinone by the oxidoreductase nsrR. A-ring reduction by the short chain dehydrogenase nsrJ, dehydration by the scytalone dehydratase-like protein nsrI and probable spontaneous re-oxidation, results in overall deoxygenation to chrysophanol. The Baeyer-Villiger monooxygenase nsrF accepts chrysophanol as a substrate to insert one oxygen atom at two different positions to yield the precursors of both monomric units. NsrF is promiscuous/flexible in interacting with the 2 (non methylated and methylated) aromatic rings of chrysophanol, thus diverging the biosynthetic pathway at this point. After the hydrolysis of the lactones, methylesterification by the methyltransferase nsrG yields respectively moniliphenone and 2,2',6'-trihydroxy-4-methyl-6-methoxya-cyldiphenylmethanone. The next steps are the hydroxylation by the FAD-dependent monooxygenase nsrK, followed by isomerization by the monooxygenase nsrQ. The short chain dehydrogenase/reductase nsrO then catalyzes the C-5 ketoreduction to give the xanthone skeleton of blennolide C and 5-acetylblennolide A. The acetyltransferase nsrL has a strict substrate specificity and uses only blennolide A but not blennolide C to yield 5-acetylblennolide A as the single-acetylated product. In the final step of the biosynthesis, the heterodimerization of the 2 xanthones, blennolide C and 5-acetylblennolide A, is catalyzed by the cytochrome P450 monooxygenase nsrP. NsrP can utilize at least three different xanthones as its substrates to perform the dimerization reaction. In Aspergillus novofumigatus (strain IBT 16806), this protein is Short chain dehydrogenase/reductase nsrJ.